Consider the following 320-residue polypeptide: Glyoxylate/hydroxypyruvate reductase B (320 aa).

Residues Arg-233 and Glu-262 contribute to the active site. The active-site Proton donor is His-281.

It belongs to the D-isomer specific 2-hydroxyacid dehydrogenase family. GhrB subfamily. In terms of assembly, homodimer.

It localises to the cytoplasm. The catalysed reaction is glycolate + NADP(+) = glyoxylate + NADPH + H(+). It carries out the reaction (R)-glycerate + NAD(+) = 3-hydroxypyruvate + NADH + H(+). It catalyses the reaction (R)-glycerate + NADP(+) = 3-hydroxypyruvate + NADPH + H(+). Its function is as follows. Catalyzes the NADPH-dependent reduction of glyoxylate and hydroxypyruvate into glycolate and glycerate, respectively. This chain is Glyoxylate/hydroxypyruvate reductase B, found in Pectobacterium atrosepticum (strain SCRI 1043 / ATCC BAA-672) (Erwinia carotovora subsp. atroseptica).